We begin with the raw amino-acid sequence, 103 residues long: Large ribosomal subunit protein uL23 (103 aa).

Belongs to the universal ribosomal protein uL23 family. Part of the 50S ribosomal subunit. Contacts protein L29, and trigger factor when it is bound to the ribosome.

One of the early assembly proteins it binds 23S rRNA. One of the proteins that surrounds the polypeptide exit tunnel on the outside of the ribosome. Forms the main docking site for trigger factor binding to the ribosome. This Chlorobium luteolum (strain DSM 273 / BCRC 81028 / 2530) (Pelodictyon luteolum) protein is Large ribosomal subunit protein uL23.